Here is a 55-residue protein sequence, read N- to C-terminus: ATP synthase F(0) complex subunit 8 (55 aa).

The chain crosses the membrane as a helical span at residues L4–I24.

It belongs to the ATPase protein 8 family. As to quaternary structure, component of the ATP synthase complex composed at least of ATP5F1A/subunit alpha, ATP5F1B/subunit beta, ATP5MC1/subunit c (homooctomer), MT-ATP6/subunit a, MT-ATP8/subunit 8, ATP5ME/subunit e, ATP5MF/subunit f, ATP5MG/subunit g, ATP5MK/subunit k, ATP5MJ/subunit j, ATP5F1C/subunit gamma, ATP5F1D/subunit delta, ATP5F1E/subunit epsilon, ATP5PF/subunit F6, ATP5PB/subunit b, ATP5PD/subunit d, ATP5PO/subunit OSCP. ATP synthase complex consists of a soluble F(1) head domain (subunits alpha(3) and beta(3)) - the catalytic core - and a membrane F(0) domain - the membrane proton channel (subunits c, a, 8, e, f, g, k and j). These two domains are linked by a central stalk (subunits gamma, delta, and epsilon) rotating inside the F1 region and a stationary peripheral stalk (subunits F6, b, d, and OSCP).

Its subcellular location is the mitochondrion membrane. Its function is as follows. Subunit 8, of the mitochondrial membrane ATP synthase complex (F(1)F(0) ATP synthase or Complex V) that produces ATP from ADP in the presence of a proton gradient across the membrane which is generated by electron transport complexes of the respiratory chain. ATP synthase complex consist of a soluble F(1) head domain - the catalytic core - and a membrane F(1) domain - the membrane proton channel. These two domains are linked by a central stalk rotating inside the F(1) region and a stationary peripheral stalk. During catalysis, ATP synthesis in the catalytic domain of F(1) is coupled via a rotary mechanism of the central stalk subunits to proton translocation. In vivo, can only synthesize ATP although its ATP hydrolase activity can be activated artificially in vitro. Part of the complex F(0) domain. The polypeptide is ATP synthase F(0) complex subunit 8 (Dicentrarchus labrax (European seabass)).